The primary structure comprises 469 residues: Pancreatic lipase-related protein 2 (469 aa).

An N-terminal signal peptide occupies residues 1–17 (MLPSWTIGLLLLATVRG). A disulfide bond links Cys-21 and Cys-27. An N-linked (GlcNAc...) asparagine glycan is attached at Asn-71. The interval 93-105 (IHGFIDDGDSGWP) is required for galactolipase activity. Cys-109 and Cys-120 form a disulfide bridge. The Nucleophile role is filled by Ser-171. Asp-195 acts as the Charge relay system in catalysis. Positions 206, 209, 211, and 214 each coordinate Ca(2+). Cys-256 and Cys-280 are oxidised to a cystine. The segment at 257–279 (QKNILSTIIDINGIWQGIQDFVA) is required for galactolipase activity. His-282 serves as the catalytic Charge relay system. Intrachain disulfides connect Cys-304/Cys-315 and Cys-318/Cys-323. N-linked (GlcNAc...) asparagine glycans are attached at residues Asn-353, Asn-399, and Asn-455. Residues 357–469 (WRYRVSVTLA…ENALQTLYPC (113 aa)) form the PLAT domain. A disulfide bridge connects residues Cys-453 and Cys-469.

Belongs to the AB hydrolase superfamily. Lipase family.

The protein resides in the secreted. It localises to the zymogen granule membrane. Its subcellular location is the cell projection. It is found in the neuron projection. The enzyme catalyses a triacylglycerol + H2O = a diacylglycerol + a fatty acid + H(+). It catalyses the reaction a 1,2-diacyl-3-O-(beta-D-galactosyl)-sn-glycerol + 2 H2O = 3-beta-D-galactosyl-sn-glycerol + 2 a fatty acid + 2 H(+). The catalysed reaction is 1,2,3-tri-(9Z-octadecenoyl)-glycerol + H2O = di-(9Z)-octadecenoylglycerol + (9Z)-octadecenoate + H(+). It carries out the reaction di-(9Z)-octadecenoylglycerol + H2O = (9Z-octadecenoyl)-glycerol + (9Z)-octadecenoate + H(+). The enzyme catalyses (9Z-octadecenoyl)-glycerol + H2O = glycerol + (9Z)-octadecenoate + H(+). It catalyses the reaction 1-(9Z-octadecenoyl)-glycerol + H2O = glycerol + (9Z)-octadecenoate + H(+). The catalysed reaction is 1,2,3-tripropanoylglycerol + H2O = dipropanoylglycerol + propanoate + H(+). It carries out the reaction 1,2,3-tributanoylglycerol + H2O = dibutanoylglycerol + butanoate + H(+). The enzyme catalyses 1,2,3-trioctanoylglycerol + H2O = dioctanoylglycerol + octanoate + H(+). It catalyses the reaction 1,2-didecanoylglycerol + H2O = decanoylglycerol + decanoate + H(+). The catalysed reaction is long chain 1,2-diacyl-3-O-beta-D-galactosyl-sn-glycerol + H2O = long chain acyl-3-O-beta-D-galactosyl-sn-glycerol + a fatty acid + H(+). It carries out the reaction 1,2-dioctanoyl-3-O-beta-D-galactosyl-sn-glycerol + H2O = octanoyl-3-(beta-D-galactosyl)-sn-glycerol + octanoate + H(+). The enzyme catalyses 1,2-didodecanoyl-3-beta-D-galactosyl-sn-glycerol + H2O = dodecanoyl-3-beta-D-galactosyl-sn-glycerol + dodecanoate + H(+). It catalyses the reaction 1-beta-D-galactosyl-2,3-didodecanoyl-sn-glycerol + H2O = 1-beta-D-galactosyl-dodecanoyl-sn-glycerol + dodecanoate + H(+). The catalysed reaction is a 1,2-diacyl-3-O-[alpha-D-galactosyl-(1-&gt;6)-beta-D-galactosyl]-sn-glycerol + H2O = acyl-3-O-[alpha-D-galactosyl-(1-&gt;6)-beta-D-galactosyl]-sn-glycerol + a fatty acid + H(+). It carries out the reaction long chain 1,2-diacyl-3-O-[alpha-D-galactosyl-(1-&gt;6)-beta-D-galactosyl]-sn-glycerol + H2O = long chain acyl-3-O-[alpha-D-galactosyl-(1-&gt;6)-beta-D-galactosyl]-sn-glycerol + a fatty acid + H(+). The enzyme catalyses 1,2-dioctanoyl-3-O-[alpha-D-galactosyl-(1-&gt;6)-beta-D-galactosyl]-sn-glycerol + H2O = octanoyl-3-O-[alpha-D-galactosyl-(1-&gt;6)-beta-D-galactosyl]-sn-glycerol + octanoate + H(+). It catalyses the reaction 1,2-didodecanoyl-3-O-[alpha-D-galactosyl-(1-&gt;6)-beta-D-galactosyl]-sn-glycerol + H2O = dodecanoyl-3-O-[alpha-D-galactosyl-(1-&gt;6)-beta-D-galactosyl]-sn-glycerol + dodecanoate + H(+). The catalysed reaction is a 1,2-diacyl-sn-glycero-3-phosphocholine + H2O = a monoacyl-sn-glycero-3-phosphocholine + a fatty acid + H(+). Its pathway is glycerolipid metabolism; triacylglycerol degradation. It functions in the pathway glycolipid metabolism. Lipase that primarily hydrolyzes triglycerides and galactosylglycerides. In neonates, may play a major role in pancreatic digestion of dietary fats such as milk fat globules enriched in long-chain triglycerides. Hydrolyzes short-, medium- and long-chain fatty acyls in triglycerides without apparent positional specificity. Can completely deacylate triacylglycerols. When the liver matures and bile salt synthesis increases, likely functions mainly as a galactolipase and monoacylglycerol lipase. Hydrolyzes monogalactosyldiglycerols (MGDG) and digalactosyldiacylglycerols (DGDG) present in a plant-based diet, releasing long-chain polyunsaturated fatty acids. Hydrolyzes medium- and long-chain fatty acyls in galactolipids. May act together with LIPF to hydrolyze partially digested triglycerides. Hydrolyzes long-chain monoglycerides with high efficiency. In cytotoxic T cells, contributes to perforin-dependent cell lysis, but is unlikely to mediate direct cytotoxicity. Also has low phospholipase activity. In neurons, required for the localization of the phospholipid 1-oleoyl-2-palmitoyl-PC (OPPC) to neurite tips through acyl chain remodeling of membrane phospholipids. The resulting OPPC-rich lipid membrane domain recruits the t-SNARE protein STX4 by selectively interacting with the STX4 transmembrane domain and this promotes surface expression of the dopamine transporter SLC6A3/DAT at neurite tips by facilitating fusion of SLC6A3-containing transport vesicles with the plasma membrane. The chain is Pancreatic lipase-related protein 2 from Bos taurus (Bovine).